The sequence spans 609 residues: Probable ubiquitin-conjugating enzyme E2 25 (609 aa).

Disordered regions lie at residues 70–99 (EEDE…LDPE) and 151–185 (ADKE…SQFS). The span at 156–178 (ASSSKSSHANNGNNSSKKATKAS) shows a compositional bias: low complexity. The UBC core domain maps to 332–492 (DWAKRIQDEW…TFILSLKTMV (161 aa)). Residue C418 is the Glycyl thioester intermediate of the active site.

This sequence belongs to the ubiquitin-conjugating enzyme family. In terms of tissue distribution, expressed in seeds, pistils, siliques, hypocotyls and leaves.

The enzyme catalyses S-ubiquitinyl-[E1 ubiquitin-activating enzyme]-L-cysteine + [E2 ubiquitin-conjugating enzyme]-L-cysteine = [E1 ubiquitin-activating enzyme]-L-cysteine + S-ubiquitinyl-[E2 ubiquitin-conjugating enzyme]-L-cysteine.. It functions in the pathway protein modification; protein ubiquitination. In terms of biological role, accepts the ubiquitin from the E1 complex and catalyzes its covalent attachment to other proteins. The polypeptide is Probable ubiquitin-conjugating enzyme E2 25 (UBC25) (Arabidopsis thaliana (Mouse-ear cress)).